The primary structure comprises 362 residues: Protein BIG GRAIN 1-like D (362 aa).

Disordered stretches follow at residues 22–113 (IDPK…TLFH), 132–168 (KFNR…GGRI), and 303–327 (VKTN…ASDS). A compositionally biased stretch (polar residues) spans 23-47 (DPKTQKTQPYVGSVNTTTKKQSIVT). Residues 50-60 (VPDRKIHRDRF) show a composition bias toward basic and acidic residues. Residues 63-78 (SVSSSSDSNSSIFSSS) show a composition bias toward low complexity. The segment covering 132–144 (KFNRHDENWENTR) has biased composition (basic and acidic residues). Residues 309–324 (EDYEDDDEDDDDDDVA) show a composition bias toward acidic residues.

The protein belongs to the BIG GRAIN 1 (BG1) plant protein family.

It is found in the cell membrane. Involved in auxin transport. Regulator of the auxin signaling pathway. The protein is Protein BIG GRAIN 1-like D of Arabidopsis thaliana (Mouse-ear cress).